Consider the following 445-residue polypeptide: C4-dicarboxylate transport protein (445 aa).

8 helical membrane passes run 17–37, 56–76, 91–111, 157–177, 200–220, 233–253, 319–339, and 367–387; these read FYQI…LLGY, LVKM…IAAM, VYFL…SHIV, FVGG…LSLA, LVAI…AFTI, MLVG…LGMV, IYMT…LSLG, and AATL…ILGV.

Belongs to the dicarboxylate/amino acid:cation symporter (DAACS) (TC 2.A.23) family.

The protein localises to the cell inner membrane. Functionally, responsible for the transport of dicarboxylates such as succinate, fumarate, and malate from the periplasm across the membrane. The sequence is that of C4-dicarboxylate transport protein from Bordetella avium (strain 197N).